A 283-amino-acid chain; its full sequence is MTKSTKILGLIGRAVDYSYSPLIHNTACRLLGLSYHYTVFNIADPSMIPDALRGAKALGIAGFNVTIPYKKSVVPFLDALSAEAASIQAVNTIVNEGGKLTGHNTDIAGFAAPLLPYRESIRGKTLSIFGAGGAALAAIEAFIRFFSPKEILLFVRNPEKASLLLEESGHDKSAPVRILCSDNPEIIRECRVIVNATPIGTRGNNDSPLPLDRELLHPGQIVYDMVYNPLDTPLLLAAQKAGAATISGIEMLIGQAEHSFTLWTGMQMPVKAVKESLLQEIQQ.

Shikimate is bound by residues 18-20 (SYS) and threonine 66. The Proton acceptor role is filled by lysine 70. Residues asparagine 91 and aspartate 106 each contribute to the shikimate site. Residues 130 to 134 (GAGGA) and methionine 225 each bind NADP(+). Tyrosine 227 contacts shikimate. NADP(+) is bound at residue glycine 248.

The protein belongs to the shikimate dehydrogenase family. As to quaternary structure, homodimer.

The enzyme catalyses shikimate + NADP(+) = 3-dehydroshikimate + NADPH + H(+). The protein operates within metabolic intermediate biosynthesis; chorismate biosynthesis; chorismate from D-erythrose 4-phosphate and phosphoenolpyruvate: step 4/7. Functionally, involved in the biosynthesis of the chorismate, which leads to the biosynthesis of aromatic amino acids. Catalyzes the reversible NADPH linked reduction of 3-dehydroshikimate (DHSA) to yield shikimate (SA). The sequence is that of Shikimate dehydrogenase (NADP(+)) from Pelodictyon phaeoclathratiforme (strain DSM 5477 / BU-1).